We begin with the raw amino-acid sequence, 560 residues long: Dihydroxy-acid dehydratase (560 aa).

Asp-78 lines the Mg(2+) pocket. Position 119 (Cys-119) interacts with [2Fe-2S] cluster. Residues Asp-120 and Lys-121 each coordinate Mg(2+). An N6-carboxylysine modification is found at Lys-121. Cys-192 is a [2Fe-2S] cluster binding site. Glu-446 lines the Mg(2+) pocket. Ser-472 acts as the Proton acceptor in catalysis.

This sequence belongs to the IlvD/Edd family. As to quaternary structure, homodimer. The cofactor is [2Fe-2S] cluster. It depends on Mg(2+) as a cofactor.

It catalyses the reaction (2R)-2,3-dihydroxy-3-methylbutanoate = 3-methyl-2-oxobutanoate + H2O. The catalysed reaction is (2R,3R)-2,3-dihydroxy-3-methylpentanoate = (S)-3-methyl-2-oxopentanoate + H2O. Its pathway is amino-acid biosynthesis; L-isoleucine biosynthesis; L-isoleucine from 2-oxobutanoate: step 3/4. It participates in amino-acid biosynthesis; L-valine biosynthesis; L-valine from pyruvate: step 3/4. Functionally, functions in the biosynthesis of branched-chain amino acids. Catalyzes the dehydration of (2R,3R)-2,3-dihydroxy-3-methylpentanoate (2,3-dihydroxy-3-methylvalerate) into 2-oxo-3-methylpentanoate (2-oxo-3-methylvalerate) and of (2R)-2,3-dihydroxy-3-methylbutanoate (2,3-dihydroxyisovalerate) into 2-oxo-3-methylbutanoate (2-oxoisovalerate), the penultimate precursor to L-isoleucine and L-valine, respectively. This Anaeromyxobacter dehalogenans (strain 2CP-C) protein is Dihydroxy-acid dehydratase.